A 424-amino-acid polypeptide reads, in one-letter code: Zinc finger and BTB domain-containing protein 6 (424 aa).

Residues 33–97 (CDVSIYINDT…CYTGALEVKR (65 aa)) form the BTB domain. Position 202 is a phosphoserine (serine 202). C2H2-type zinc fingers lie at residues 301–323 (HQCP…LKMH), 326–348 (FLCL…IRGH), 354–376 (FQCT…LNIH), and 382–405 (YKCH…TSVH). Positions 402–424 (TSVHGRSSGEKLSRPDLKRQSLL) are disordered. The span at 408-424 (SSGEKLSRPDLKRQSLL) shows a compositional bias: basic and acidic residues.

As to expression, widely expressed with highest levels in brain.

Its subcellular location is the nucleus. Its function is as follows. May be involved in transcriptional regulation. The sequence is that of Zinc finger and BTB domain-containing protein 6 (ZBTB6) from Homo sapiens (Human).